The following is a 261-amino-acid chain: DNA repair protein RecO (261 aa).

This sequence belongs to the RecO family.

Involved in DNA repair and RecF pathway recombination. The protein is DNA repair protein RecO of Chlorobium phaeobacteroides (strain BS1).